A 1146-amino-acid polypeptide reads, in one-letter code: Elicitor of plant defense protein 1 (1146 aa).

2 disordered regions span residues 25–75 (DPLP…RLSN) and 156–226 (ARPP…PRQG). Residues 164–177 (RAERIKAEDSDQSG) are compositionally biased toward basic and acidic residues. The uDENN domain maps to 246 to 500 (PLNTDPNMHP…NLCTEAFSPL (255 aa)). Residues 522–656 (VNEIPGSRTI…HRRKLHALLQ (135 aa)) form the cDENN domain. Residues 658–1016 (AAPAKLRYGV…ERETKPGTTA (359 aa)) form the dDENN domain. Residues 730–806 (LHSKVDPNKP…RRSSSFGVDK (77 aa)) are disordered. Residues 732 to 743 (SKVDPNKPDRPG) are compositionally biased toward basic and acidic residues. Positions 744–760 (TSKSTRTSPPSSVSPVS) are enriched in low complexity. Residues 769–783 (TPVSRSDSGFALTST) show a composition bias toward polar residues. The segment covering 784 to 797 (LREKRSRNFDEKTR) has biased composition (basic and acidic residues). A Phorbol-ester/DAG-type zinc finger spans residues 883–931 (GHCFNWEEGALSSSCSVCDDRAEGDGIYKCSGCSAFAHGRCLGCVSLAC). Residues 1121–1146 (PRPEQRGTRGLVRKQVPSMLGTSPTN) are disordered.

The protein belongs to the EPD1 elicitor family. As to quaternary structure, interacts with host cotton EIR5A (AC A0A5J5T2N2) and EIR5D (AC A0A5J5NT52) and host N.benthamiana EIR (AC P0DXJ0).

Its subcellular location is the secreted. The protein localises to the host cell. In terms of biological role, acts as an elicitor that triggers defense responses in both Nicotiana benthamiana and cotton plants. Triggers the accumulation of reactive oxygen species (ROS) and the activation of cell death in cotton plants. Induces significantly enhanced resistance of Nicotiana benthamiana to both the broad-host-range filamentous pathogen Botrytis cinerea and the semibiotrophic pathogen Phytophthora capsici. Stimulates the expression of EIR5A (AC A0A5J5T2N2) and EIR5D (AC A0A5J5NT52) in cotton plants and recognition of EPD1 potentiates EIRs to enhance cotton PAMP-triggered immunity (PTI). This Verticillium dahliae (strain VdLs.17 / ATCC MYA-4575 / FGSC 10137) (Verticillium wilt) protein is Elicitor of plant defense protein 1.